Reading from the N-terminus, the 158-residue chain is NAD(P)H-quinone oxidoreductase subunit J, chloroplastic (158 aa).

Belongs to the complex I 30 kDa subunit family. As to quaternary structure, NDH is composed of at least 16 different subunits, 5 of which are encoded in the nucleus.

Its subcellular location is the plastid. It localises to the chloroplast thylakoid membrane. It carries out the reaction a plastoquinone + NADH + (n+1) H(+)(in) = a plastoquinol + NAD(+) + n H(+)(out). The enzyme catalyses a plastoquinone + NADPH + (n+1) H(+)(in) = a plastoquinol + NADP(+) + n H(+)(out). Its function is as follows. NDH shuttles electrons from NAD(P)H:plastoquinone, via FMN and iron-sulfur (Fe-S) centers, to quinones in the photosynthetic chain and possibly in a chloroplast respiratory chain. The immediate electron acceptor for the enzyme in this species is believed to be plastoquinone. Couples the redox reaction to proton translocation, and thus conserves the redox energy in a proton gradient. This chain is NAD(P)H-quinone oxidoreductase subunit J, chloroplastic, found in Acorus calamus var. americanus (American sweet flag).